The sequence spans 255 residues: 5'-nucleotidase SurE (255 aa).

A divalent metal cation-binding residues include Asp-8, Asp-9, Ser-39, and Asn-95.

Belongs to the SurE nucleotidase family. A divalent metal cation serves as cofactor.

It is found in the cytoplasm. The enzyme catalyses a ribonucleoside 5'-phosphate + H2O = a ribonucleoside + phosphate. In terms of biological role, nucleotidase that shows phosphatase activity on nucleoside 5'-monophosphates. This Thermosipho melanesiensis (strain DSM 12029 / CIP 104789 / BI429) protein is 5'-nucleotidase SurE.